Consider the following 631-residue polypeptide: 1-deoxy-D-xylulose-5-phosphate synthase (631 aa).

Thiamine diphosphate contacts are provided by residues histidine 87 and 128 to 130 (GHS). Aspartate 159 contributes to the Mg(2+) binding site. Thiamine diphosphate-binding positions include 160 to 161 (GA), asparagine 188, phenylalanine 295, and glutamate 377. Asparagine 188 contributes to the Mg(2+) binding site.

The protein belongs to the transketolase family. DXPS subfamily. In terms of assembly, homodimer. Requires Mg(2+) as cofactor. Thiamine diphosphate serves as cofactor.

It catalyses the reaction D-glyceraldehyde 3-phosphate + pyruvate + H(+) = 1-deoxy-D-xylulose 5-phosphate + CO2. The protein operates within metabolic intermediate biosynthesis; 1-deoxy-D-xylulose 5-phosphate biosynthesis; 1-deoxy-D-xylulose 5-phosphate from D-glyceraldehyde 3-phosphate and pyruvate: step 1/1. Its function is as follows. Catalyzes the acyloin condensation reaction between C atoms 2 and 3 of pyruvate and glyceraldehyde 3-phosphate to yield 1-deoxy-D-xylulose-5-phosphate (DXP). The sequence is that of 1-deoxy-D-xylulose-5-phosphate synthase from Pseudomonas putida (strain ATCC 47054 / DSM 6125 / CFBP 8728 / NCIMB 11950 / KT2440).